Here is a 551-residue protein sequence, read N- to C-terminus: Cleavage and polyadenylation specificity factor subunit 6 (551 aa).

Residues 1 to 213 (MADGVDHIDI…RGRFPGAVPG (213 aa)) are necessary for interaction with NXF1. The RRM domain maps to 81–161 (IALYIGNLTW…QNPVVTPCNK (81 aa)). The tract at residues 81–161 (IALYIGNLTW…QNPVVTPCNK (81 aa)) is necessary for interaction with NUDT21/CPSF5. Residues 81–161 (IALYIGNLTW…QNPVVTPCNK (81 aa)) are necessary for nuclear paraspeckles localization. Residue threonine 157 is modified to Phosphothreonine. The segment covering 169-180 (MQSRKTTQSGQM) has biased composition (polar residues). 2 disordered regions span residues 169 to 411 (MQSR…PLSE) and 477 to 551 (LHGI…YRHR). The short motif at 202 to 206 (RGRGR) is the GAR element. Residues 207 to 219 (FPGAVPGGDRFPG) show a composition bias toward low complexity. Composition is skewed to pro residues over residues 220 to 265 (PAGP…PLAG), 285 to 366 (GQPP…PPPT), and 377 to 388 (GPPPTDPYGRPP). Residues 358–551 (NPAFFPPPTN…RDREREYRHR (194 aa)) form a (Microbial infection) Binds to HIV-1 capsid protein p24 (CA) region. Residues 389-404 (PYDRGDYGPPGREMDT) are compositionally biased toward basic and acidic residues. Phosphothreonine is present on residues threonine 404 and threonine 407. The tract at residues 404–551 (TARTPLSEAE…RDREREYRHR (148 aa)) is sufficient for nuclear speckle localization. The segment at 405–551 (ARTPLSEAEF…RDREREYRHR (147 aa)) is necessary for RNA-binding. Residues 481 to 551 (ESKSYGSGSR…RDREREYRHR (71 aa)) are necessary for interaction with SRSF3, SRSF7 and TRA2B/SFRS10. A compositionally biased stretch (basic and acidic residues) spans 489–503 (SRRERSRERDHSRSR). The tract at residues 490–551 (RRERSRERDH…RDREREYRHR (62 aa)) is arg/Ser-rich domain. A phosphoserine mark is found at serine 494, serine 500, serine 511, serine 513, and serine 525. Positions 504 to 514 (EKSRRHKSRSR) are enriched in basic residues. The sufficient for nuclear targeting stretch occupies residues 510 to 551 (KSRSRDRHDDYYRERSRERERHRDRDRDRDRERDREREYRHR). Residues 515–551 (DRHDDYYRERSRERERHRDRDRDRDRERDREREYRHR) are compositionally biased toward basic and acidic residues.

It belongs to the RRM CPSF6/7 family. In terms of assembly, component of the cleavage factor Im (CFIm) complex which is a heterotetramer composed of two subunits of NUDT21/CPSF5 and two subunits of CPSF6 or CPSF7 or a heterodimer of CPSF6 and CPSF7. The cleavage factor Im (CFIm) complex associates with the CPSF and CSTF complexes to promote the assembly of the core mRNA 3'-processing machinery. Associates with the exon junction complex (EJC). Associates with the 80S ribosome particle. Interacts (via the RRM domain) with NUDT21/CPSF5; this interaction is direct and enhances binding to RNA. Interacts (via Arg/Ser-rich domain) with FIP1L1 (preferentially via unphosphorylated form and Arg/Glu/Asp-rich domain); this interaction mediates, at least in part, the interaction between the CFIm and CPSF complexes and may be inhibited by CPSF6 hyper-phosphorylation. Interacts (via N-terminus) with NXF1; this interaction is direct. Interacts with SRSF3. Interacts with SRSF7. Interacts with SNRNP70. Interacts with TRA2B/SFRS10. Interacts with UPF1. Interacts with UPF3B. Interacts with VIRMA. Interacts (via Arg/Ser-rich domain) with TNPO3; promoting nuclear import of CPSF6 independently of its phosphorylation status. Interacts with YTHDC1. (Microbial infection) Interacts (via C-terminus) with HIV-1 capsid protein p24 (CA). Post-translationally, phosphorylated. Phosphorylated in the Arg/Ser-rich domain by SRPK1, in vitro. In terms of processing, symmetrically dimethylated on arginine residues in the GAR motif by PRMT5 in a WDR77- and CLNS1A-dependent manner. Asymmetrically dimethylated on arginine residues in the GAR motif by PRMT1.

The protein localises to the nucleus. It localises to the nucleoplasm. Its subcellular location is the nucleus speckle. The protein resides in the cytoplasm. In terms of biological role, component of the cleavage factor Im (CFIm) complex that functions as an activator of the pre-mRNA 3'-end cleavage and polyadenylation processing required for the maturation of pre-mRNA into functional mRNAs. CFIm contributes to the recruitment of multiprotein complexes on specific sequences on the pre-mRNA 3'-end, so called cleavage and polyadenylation signals (pA signals). Most pre-mRNAs contain multiple pA signals, resulting in alternative cleavage and polyadenylation (APA) producing mRNAs with variable 3'-end formation. The CFIm complex acts as a key regulator of cleavage and polyadenylation site choice during APA through its binding to 5'-UGUA-3' elements localized in the 3'-untranslated region (UTR) for a huge number of pre-mRNAs. CPSF6 enhances NUDT21/CPSF5 binding to 5'-UGUA-3' elements localized upstream of pA signals and promotes RNA looping, and hence activates directly the mRNA 3'-processing machinery. Plays a role in mRNA export. Functionally, (Microbial infection) Binds HIV-1 capsid-nucleocapsid (HIV-1 CA-NC) complexes and might thereby promote the integration of the virus in the nucleus of dividing cells (in vitro). In Homo sapiens (Human), this protein is Cleavage and polyadenylation specificity factor subunit 6.